The chain runs to 708 residues: MSERGIKWACEYCTYENWPSAIKCTMCRAQRPSGTIITEDPFKSGSSDVGRDWDPSSTEGGSSPLICPDSSARPRVKSSYSMENANKWSCHMCTYLNWPRAIRCTQCLSQRRTRSPTESPQSSGSGSRPVAFSVDPCEEYNDRNKLNTRTQHWTCSICTYENWAKAKKCVVCDHPRPNNIEAIEFAETEEASSIINEQDRARWRGSCSSGNSQRRSPPTMKRDSEVKMDFQRIELAGAVGSKEELEVDFKKLKQIKNRMKKTDWLFLNACVGVVEGDLAAIEAYKSSGGDIARQLTADEVRLLNRPSAFDVGYTLVHLAIRFQRQDMLAILLTEVSQQAAKCIPAMVCPELTEQIRREIAASLHQRKGDFACYFLTDLVTFTLPADIEDLPPTVQEKLFDEVLDRDVQKELEEESPIINWSLELATRLDSRLYALWNRTAGDCLLDSVLQATWGIYDKDSVLRKALHDSLHDCSHWFYTRWKDWESWYSQSFGLHFSLREEQWQEDWAFILSLASQPGASLEQTHIFVLAHILRRPIIVYGVKYYKSFRGETLGYTRFQGVYLPLLWEQSFCWKSPIALGYTRGHFSALVAMENDGYGNRGAGANLNTDDDVTITFLPLVDSERKLLHVHFLSAQELGNEEQQEKLLREWLDCCVTEGGVLVAMQKSSRRRNHPLVTQMVEKWLDRYRQIRPCTSLSDGEEDEDDEDE.

The segment at 3–33 (ERGIKWACEYCTYENWPSAIKCTMCRAQRPS) adopts a RanBP2-type 1 zinc-finger fold. The Zn(2+) site is built by C10, C13, C24, and C27. The segment at 38–73 (TEDPFKSGSSDVGRDWDPSSTEGGSSPLICPDSSAR) is disordered. 2 consecutive RanBP2-type zinc fingers follow at residues 84 to 113 (NANKWSCHMCTYLNWPRAIRCTQCLSQRRT) and 149 to 178 (RTQHWTCSICTYENWAKAKKCVVCDHPRPN). The Zn(2+) site is built by C90, C93, C104, C107, C155, C158, C169, and C172. The tract at residues 200–223 (RARWRGSCSSGNSQRRSPPTMKRD) is disordered. Residues 206–216 (SCSSGNSQRRS) show a composition bias toward polar residues. ANK repeat units lie at residues 260–290 (KKTDWLFLNACVGVVEGDLAAIEAYKSSGGD) and 313–340 (YTLVHLAIRFQRQDMLAILLTEVSQQAA). The OTU domain occupies 432–592 (LYALWNRTAG…RGHFSALVAM (161 aa)). C443 (nucleophile) is an active-site residue. The Proton acceptor role is filled by H585.

It belongs to the peptidase C64 family. As to quaternary structure, interacts with TRAF6. Interacts with APC.

It is found in the cytoplasm. Its subcellular location is the nucleus. The enzyme catalyses Thiol-dependent hydrolysis of ester, thioester, amide, peptide and isopeptide bonds formed by the C-terminal Gly of ubiquitin (a 76-residue protein attached to proteins as an intracellular targeting signal).. Ubiquitin thioesterase, which specifically hydrolyzes 'Lys-29'-linked and 'Lys-33'-linked diubiquitin. Also cleaves 'Lys-63'-linked chains, but with 40-fold less efficiency compared to 'Lys-29'-linked ones. Positive regulator of the Wnt signaling pathway that deubiquitinates APC protein, a negative regulator of Wnt-mediated transcription. Acts as a regulator of autophagy by mediating deubiquitination of PIK3C3/VPS34, thereby promoting autophagosome maturation. Plays a role in the regulation of cell morphology and cytoskeletal organization. Required in the stress fiber dynamics and cell migration. The chain is Ubiquitin thioesterase ZRANB1 from Bos taurus (Bovine).